Consider the following 229-residue polypeptide: Large ribosomal subunit protein uL1 (229 aa).

As to quaternary structure, part of the 50S ribosomal subunit.

Functionally, binds directly to 23S rRNA. The L1 stalk is quite mobile in the ribosome, and is involved in E site tRNA release. In terms of biological role, protein L1 is also a translational repressor protein, it controls the translation of the L11 operon by binding to its mRNA. The sequence is that of Large ribosomal subunit protein uL1 from Rhodopseudomonas palustris (strain ATCC BAA-98 / CGA009).